A 321-amino-acid polypeptide reads, in one-letter code: Probable cell division protein WhiA (321 aa).

The segment at residues asparagine 276–glutamine 309 is a DNA-binding region (H-T-H motif).

The protein belongs to the WhiA family.

Involved in cell division and chromosome segregation. In Natranaerobius thermophilus (strain ATCC BAA-1301 / DSM 18059 / JW/NM-WN-LF), this protein is Probable cell division protein WhiA.